A 444-amino-acid chain; its full sequence is Chromosome partition protein MukF (444 aa).

The leucine-zipper stretch occupies residues 212–240 (LDETSGNLRELQDTLNAAGDKLQAQLLRI).

It belongs to the MukF family. In terms of assembly, interacts, and probably forms a ternary complex, with MukE and MukB via its C-terminal region. The complex formation is stimulated by calcium or magnesium. It is required for an interaction between MukE and MukB.

The protein localises to the cytoplasm. It localises to the nucleoid. Involved in chromosome condensation, segregation and cell cycle progression. May participate in facilitating chromosome segregation by condensation DNA from both sides of a centrally located replisome during cell division. Not required for mini-F plasmid partitioning. Probably acts via its interaction with MukB and MukE. Overexpression results in anucleate cells. It has a calcium binding activity. This chain is Chromosome partition protein MukF, found in Haemophilus influenzae (strain PittEE).